A 371-amino-acid chain; its full sequence is Cytochrome b (371 aa).

Transmembrane regions (helical) follow at residues 25–45 (FGSMLLTCLALQVLTGFFLAV), 69–90 (WMMQNLHAIGASMFFICIYIHI), 105–125 (WMSGITLLITLMATAFFGYVL), and 170–190 (FFALHFILPFAIISLSSLHII). 2 residues coordinate heme b: His-75 and His-89. Positions 174 and 188 each coordinate heme b. His-193 is a binding site for a ubiquinone. Helical transmembrane passes span 218–238 (YKDLLLLTLMILFLFIIVSFF), 280–300 (LGGALALVMSIMILFTIPFMH), 312–332 (LSQLMFWTLVSTFITITWAAT), and 339–358 (YIMISQMTATLYFTFFLSIP).

This sequence belongs to the cytochrome b family. As to quaternary structure, the cytochrome bc1 complex contains 3 respiratory subunits (MT-CYB, CYC1 and UQCRFS1), 2 core proteins (UQCRC1 and UQCRC2) and probably 6 low-molecular weight proteins. The cofactor is heme b.

The protein localises to the mitochondrion inner membrane. Functionally, component of the ubiquinol-cytochrome c reductase complex (complex III or cytochrome b-c1 complex) that is part of the mitochondrial respiratory chain. The b-c1 complex mediates electron transfer from ubiquinol to cytochrome c. Contributes to the generation of a proton gradient across the mitochondrial membrane that is then used for ATP synthesis. The protein is Cytochrome b (MT-CYB) of Simalia amethistina (Amethystine python).